Reading from the N-terminus, the 372-residue chain is Putative F-box/kelch-repeat protein At3g22730 (372 aa).

Positions 1 to 50 (MMMSDLSLDLVEEILSRVPATSLKRLRSTCKLWNALFKNPGFTKKQFLKA) constitute an F-box domain. Kelch repeat units follow at residues 155–204 (ILRC…SFKG), 245–293 (ALSV…PIRG), and 324–372 (KVYI…IIKE).

This chain is Putative F-box/kelch-repeat protein At3g22730, found in Arabidopsis thaliana (Mouse-ear cress).